The chain runs to 454 residues: O-phospho-L-seryl-tRNA:Cys-tRNA synthase 2 (454 aa).

Pyridoxal 5'-phosphate-binding positions include 146-147 (AR), N251, and 274-276 (SGH). K277 carries the post-translational modification N6-(pyridoxal phosphate)lysine.

It belongs to the SepCysS family. As to quaternary structure, homodimer. Interacts with SepRS. Pyridoxal 5'-phosphate serves as cofactor.

It carries out the reaction O-phospho-L-seryl-tRNA(Cys) + hydrogen sulfide + H(+) = L-cysteinyl-tRNA(Cys) + phosphate. In terms of biological role, converts O-phospho-L-seryl-tRNA(Cys) (Sep-tRNA(Cys)) to L-cysteinyl-tRNA(Cys) (Cys-tRNA(Cys)). The protein is O-phospho-L-seryl-tRNA:Cys-tRNA synthase 2 of Methanoregula boonei (strain DSM 21154 / JCM 14090 / 6A8).